The chain runs to 325 residues: Quinolinate synthase (325 aa).

Iminosuccinate-binding residues include histidine 41 and serine 58. Residue cysteine 103 participates in [4Fe-4S] cluster binding. Iminosuccinate contacts are provided by residues 129–131 (YIN) and serine 146. A [4Fe-4S] cluster-binding site is contributed by cysteine 189. Iminosuccinate is bound by residues 215 to 217 (HPE) and threonine 232. Cysteine 282 serves as a coordination point for [4Fe-4S] cluster.

This sequence belongs to the quinolinate synthase family. Type 2 subfamily. [4Fe-4S] cluster is required as a cofactor.

It is found in the cytoplasm. It carries out the reaction iminosuccinate + dihydroxyacetone phosphate = quinolinate + phosphate + 2 H2O + H(+). It functions in the pathway cofactor biosynthesis; NAD(+) biosynthesis; quinolinate from iminoaspartate: step 1/1. Its function is as follows. Catalyzes the condensation of iminoaspartate with dihydroxyacetone phosphate to form quinolinate. This Rippkaea orientalis (strain PCC 8801 / RF-1) (Cyanothece sp. (strain PCC 8801)) protein is Quinolinate synthase.